The primary structure comprises 264 residues: Ribosomal RNA small subunit methyltransferase J (264 aa).

S-adenosyl-L-methionine-binding positions include 111–112, 127–128, and Asp180; these read RD and ER.

It belongs to the methyltransferase superfamily. RsmJ family.

It localises to the cytoplasm. The catalysed reaction is guanosine(1516) in 16S rRNA + S-adenosyl-L-methionine = N(2)-methylguanosine(1516) in 16S rRNA + S-adenosyl-L-homocysteine + H(+). Its function is as follows. Specifically methylates the guanosine in position 1516 of 16S rRNA. In Alkalilimnicola ehrlichii (strain ATCC BAA-1101 / DSM 17681 / MLHE-1), this protein is Ribosomal RNA small subunit methyltransferase J.